A 195-amino-acid chain; its full sequence is Thymidine kinase (195 aa).

Residues 8–15 (GLMGSGKS) and 86–89 (DESQ) contribute to the ATP site. Glu-87 (proton acceptor) is an active-site residue. Residues Cys-146, Cys-151, Cys-184, and His-187 each coordinate Zn(2+).

Belongs to the thymidine kinase family. Homotetramer.

Its subcellular location is the cytoplasm. It carries out the reaction thymidine + ATP = dTMP + ADP + H(+). The protein is Thymidine kinase (tdk) of Bacillus subtilis subsp. natto.